The primary structure comprises 181 residues: Acireductone dioxygenase (181 aa).

Fe(2+) contacts are provided by His-98, His-100, Glu-104, and His-142. Residues His-98, His-100, Glu-104, and His-142 each contribute to the Ni(2+) site.

It belongs to the acireductone dioxygenase (ARD) family. Monomer. Fe(2+) serves as cofactor. It depends on Ni(2+) as a cofactor.

The catalysed reaction is 1,2-dihydroxy-5-(methylsulfanyl)pent-1-en-3-one + O2 = 3-(methylsulfanyl)propanoate + CO + formate + 2 H(+). It catalyses the reaction 1,2-dihydroxy-5-(methylsulfanyl)pent-1-en-3-one + O2 = 4-methylsulfanyl-2-oxobutanoate + formate + 2 H(+). It participates in amino-acid biosynthesis; L-methionine biosynthesis via salvage pathway; L-methionine from S-methyl-5-thio-alpha-D-ribose 1-phosphate: step 5/6. Catalyzes 2 different reactions between oxygen and the acireductone 1,2-dihydroxy-3-keto-5-methylthiopentene (DHK-MTPene) depending upon the metal bound in the active site. Fe-containing acireductone dioxygenase (Fe-ARD) produces formate and 2-keto-4-methylthiobutyrate (KMTB), the alpha-ketoacid precursor of methionine in the methionine recycle pathway. Ni-containing acireductone dioxygenase (Ni-ARD) produces methylthiopropionate, carbon monoxide and formate, and does not lie on the methionine recycle pathway. The chain is Acireductone dioxygenase from Alcanivorax borkumensis (strain ATCC 700651 / DSM 11573 / NCIMB 13689 / SK2).